A 306-amino-acid chain; its full sequence is Protein YIPF1 (306 aa).

Residues 1 to 119 (MAAVDDLQFE…VRLYIRSNPD (119 aa)) are Cytoplasmic-facing. Residues 30 to 63 (IEDPSVSFGHQPRPPGSVGREEDEELLGNNDSDE) form a disordered region. Residues 50-63 (EEDEELLGNNDSDE) show a composition bias toward acidic residues. A helical membrane pass occupies residues 120–140 (LYGPFWICATLVFAIAISGNL). Residues 141–162 (SNFLIHLGEKTYHYVPEFQKVS) lie on the Lumenal side of the membrane. The chain crosses the membrane as a helical span at residues 163-183 (IAATVIYAYAWLVPLALWGFL). The Cytoplasmic portion of the chain corresponds to 184 to 200 (LWRNSKVMSMVSYSFLE). The chain crosses the membrane as a helical span at residues 201 to 221 (IVCVYGYSLFIYIPTAVLWII). Residues 222 to 227 (PQRVVR) lie on the Lumenal side of the membrane. The helical transmembrane segment at 228–248 (WVLVMIALGVSGSVLVMTFWP) threads the bilayer. Topologically, residues 249–256 (AVREDNRR) are cytoplasmic. A helical membrane pass occupies residues 257-277 (VALATIVTIVLLHVLLSVGCL). Residues 278-306 (AYFFDAPEMDHLPAAITTPNQTVTAAKSS) lie on the Lumenal side of the membrane. A glycan (N-linked (GlcNAc...) asparagine) is linked at N297.

The protein belongs to the YIP1 family. Interacts with YIPF6; this interaction may stabilize YIPF1. May also form a ternary complex with YIPF2 and YIPF6.

The protein resides in the golgi apparatus. Its subcellular location is the cis-Golgi network membrane. It localises to the trans-Golgi network membrane. It is found in the late endosome membrane. The protein is Protein YIPF1 (Yipf1) of Mus musculus (Mouse).